A 600-amino-acid chain; its full sequence is Methionine--tRNA ligase (600 aa).

The 'HIGH' region motif lies at Pro-11–His-21. The Zn(2+) site is built by Cys-143, Cys-146, Cys-156, and Cys-159. The 'KMSKS' region signature appears at Lys-351–Ser-355. Ser-354 serves as a coordination point for ATP.

This sequence belongs to the class-I aminoacyl-tRNA synthetase family. MetG type 1 subfamily. As to quaternary structure, monomer. Zn(2+) serves as cofactor.

It is found in the cytoplasm. It carries out the reaction tRNA(Met) + L-methionine + ATP = L-methionyl-tRNA(Met) + AMP + diphosphate. Its function is as follows. Is required not only for elongation of protein synthesis but also for the initiation of all mRNA translation through initiator tRNA(fMet) aminoacylation. This Salinispora arenicola (strain CNS-205) protein is Methionine--tRNA ligase.